We begin with the raw amino-acid sequence, 360 residues long: Casein kinase II subunit alpha (360 aa).

Residues 38–323 form the Protein kinase domain; that stretch reads YQLVRKLGRG…AQEAMGHEYF (286 aa). Residues 44–52 and K67 contribute to the ATP site; that span reads LGRGKYSEV. Residue D155 is the Proton acceptor of the active site. Residues 334–360 form a disordered region; sequence NGTEQADGQGASNSASSQSSDAKIDGA. Low complexity predominate over residues 338-354; the sequence is QADGQGASNSASSQSSD.

The protein belongs to the protein kinase superfamily. Ser/Thr protein kinase family. CK2 subfamily. Tetramer of two alpha and two beta chains. In terms of tissue distribution, expressed in a subset of the adult male sensory neurons: CEM head neurons, ray RnB neurons, and hook HOB tail neurons.

It is found in the cell projection. Its subcellular location is the axon. It localises to the cilium. The protein resides in the dendrite. The protein localises to the perikaryon. The enzyme catalyses L-seryl-[protein] + ATP = O-phospho-L-seryl-[protein] + ADP + H(+). It carries out the reaction L-threonyl-[protein] + ATP = O-phospho-L-threonyl-[protein] + ADP + H(+). In terms of biological role, casein kinases are operationally defined by their preferential utilization of acidic proteins such as caseins as substrates. The alpha chain contains the catalytic site. May participate in Wnt signaling. Modulates two aspects of male mating behavior; response to hermaphrodite contact and vulval location, acting in the same pathway as lov-1 and pkd-2. The polypeptide is Casein kinase II subunit alpha (kin-3) (Caenorhabditis elegans).